A 368-amino-acid chain; its full sequence is Zinc finger protein 24 (368 aa).

Residue lysine 22 forms a Glycyl lysine isopeptide (Lys-Gly) (interchain with G-Cter in SUMO2) linkage. Residue lysine 27 forms a Glycyl lysine isopeptide (Lys-Gly) (interchain with G-Cter in SUMO1); alternate linkage. Lysine 27 participates in a covalent cross-link: Glycyl lysine isopeptide (Lys-Gly) (interchain with G-Cter in SUMO2); alternate. The 83-residue stretch at 52–134 (RQRFRQFGYQ…TVLEDLESEL (83 aa)) folds into the SCAN box domain. Phosphoserine occurs at positions 132 and 142. Residues lysine 147, lysine 177, and lysine 236 each participate in a glycyl lysine isopeptide (Lys-Gly) (interchain with G-Cter in SUMO2) cross-link. Residues 251 to 273 (HICDECGKHFSQGSALILHQRIH) form a C2H2-type 1 zinc finger. Positions 251–301 (HICDECGKHFSQGSALILHQRIHSGEKPYGCVECGKAFSRSSILVQHQRVH) are necessary and sufficient for nuclear localization. Serine 274 carries the phosphoserine modification. Glycyl lysine isopeptide (Lys-Gly) (interchain with G-Cter in SUMO2) cross-links involve residues lysine 277 and lysine 286. 3 consecutive C2H2-type zinc fingers follow at residues 279 to 301 (YGCV…QRVH), 307 to 329 (YKCL…QRIH), and 335 to 357 (YECV…XXXH). Position 292 is a phosphoserine (serine 292). Tyrosine 335 is modified (phosphotyrosine). Glycyl lysine isopeptide (Lys-Gly) (interchain with G-Cter in SUMO2) cross-links involve residues lysine 361 and lysine 367.

This sequence belongs to the krueppel C2H2-type zinc-finger protein family. Post-translationally, sumoylated.

Its subcellular location is the nucleus. In terms of biological role, transcription factor required for myelination of differentiated oligodendrocytes. Required for the conversion of oligodendrocytes from the premyelinating to the myelinating state. In the developing central nervous system (CNS), involved in the maintenance in the progenitor stage by promoting the cell cycle. Specifically binds to the 5'-TCAT-3' DNA sequence. Has transcription repressor activity in vitro. The protein is Zinc finger protein 24 (ZNF24) of Pan paniscus (Pygmy chimpanzee).